Consider the following 151-residue polypeptide: Mediator of RNA polymerase II transcription subunit 32 (151 aa).

Positions Gly128–Gln151 are disordered.

This sequence belongs to the mediator complex subunit 32 family. As to quaternary structure, oligomers. Component of the Mediator complex. Interacts with MED6. Interacts with GEBPL.

It localises to the nucleus. Functionally, component of the Mediator complex, a coactivator involved in the regulated transcription of nearly all RNA polymerase II-dependent genes. Mediator functions as a bridge to convey information from gene-specific regulatory proteins to the basal RNA polymerase II transcription machinery. The Mediator complex, having a compact conformation in its free form, is recruited to promoters by direct interactions with regulatory proteins and serves for the assembly of a functional pre-initiation complex with RNA polymerase II and the general transcription factors. The polypeptide is Mediator of RNA polymerase II transcription subunit 32 (MED32) (Arabidopsis thaliana (Mouse-ear cress)).